The chain runs to 267 residues: MSRIGVAFDQARAEGRAVLVGCMPAGFPTVEGSIAAMTAMVEAGVDVIEVEIPYSDPVMDGPVIQRASDVALAGGVRVADTLRIVEAVAATGAPVVTMTYWNPVEQYGVDAFARDLAAAGGTGLITPDLIPDEAQEWLAASDAYGLDRTFLVSPSSTDARLHMTVEQCRGFVYATTIMGVTGARAQASAAAPVLVSRVRAVTDLPVGVGLGIGTGEQASTASSFADGVIVGSALIRRLLDAPNLPAGLTALRELSAELAAGVRTPAP.

Catalysis depends on proton acceptor residues glutamate 49 and aspartate 60.

The protein belongs to the TrpA family. As to quaternary structure, tetramer of two alpha and two beta chains.

The catalysed reaction is (1S,2R)-1-C-(indol-3-yl)glycerol 3-phosphate + L-serine = D-glyceraldehyde 3-phosphate + L-tryptophan + H2O. The protein operates within amino-acid biosynthesis; L-tryptophan biosynthesis; L-tryptophan from chorismate: step 5/5. Its function is as follows. The alpha subunit is responsible for the aldol cleavage of indoleglycerol phosphate to indole and glyceraldehyde 3-phosphate. The polypeptide is Tryptophan synthase alpha chain (Salinispora tropica (strain ATCC BAA-916 / DSM 44818 / JCM 13857 / NBRC 105044 / CNB-440)).